The following is a 594-amino-acid chain: Potassium-transporting ATPase potassium-binding subunit (594 aa).

Helical transmembrane passes span 3–23 (ADFL…APLL), 67–87 (AVAM…LQRL), 136–156 (ALTV…IALV), 179–199 (LYVL…QGVV), 287–307 (LEML…GEMV), 314–334 (VAIL…AAYF), 415–435 (GLYG…LMIG), 453–473 (VALV…VAVL), 519–539 (VLLG…ILAL), and 562–582 (LFVA…YVPA).

The protein belongs to the KdpA family. As to quaternary structure, the system is composed of three essential subunits: KdpA, KdpB and KdpC.

It is found in the cell inner membrane. Part of the high-affinity ATP-driven potassium transport (or Kdp) system, which catalyzes the hydrolysis of ATP coupled with the electrogenic transport of potassium into the cytoplasm. This subunit binds the periplasmic potassium ions and delivers the ions to the membrane domain of KdpB through an intramembrane tunnel. The protein is Potassium-transporting ATPase potassium-binding subunit of Bordetella parapertussis (strain 12822 / ATCC BAA-587 / NCTC 13253).